A 342-amino-acid polypeptide reads, in one-letter code: Isopentenyl-diphosphate delta-isomerase (342 aa).

11-12 (RK) serves as a coordination point for substrate. FMN-binding positions include S68, 69 to 71 (SMT), S99, and N128. Residue 99–101 (SQR) participates in substrate binding. Q162 is a binding site for substrate. A Mg(2+)-binding site is contributed by E163. FMN-binding positions include K194, S219, T224, 275–277 (GVR), and 296–297 (AK).

The protein belongs to the IPP isomerase type 2 family. Homooctamer. Dimer of tetramers. FMN is required as a cofactor. Requires NADPH as cofactor. The cofactor is Mg(2+).

It localises to the cytoplasm. The catalysed reaction is isopentenyl diphosphate = dimethylallyl diphosphate. Functionally, involved in the biosynthesis of isoprenoids. Catalyzes the 1,3-allylic rearrangement of the homoallylic substrate isopentenyl (IPP) to its allylic isomer, dimethylallyl diphosphate (DMAPP). The chain is Isopentenyl-diphosphate delta-isomerase from Legionella pneumophila subsp. pneumophila (strain Philadelphia 1 / ATCC 33152 / DSM 7513).